Consider the following 337-residue polypeptide: DNA-directed RNA polymerase subunit alpha (337 aa).

The segment at Met1–Gln233 is alpha N-terminal domain (alpha-NTD). Positions Ile267 to Phe337 are alpha C-terminal domain (alpha-CTD).

It belongs to the RNA polymerase alpha chain family. In plastids the minimal PEP RNA polymerase catalytic core is composed of four subunits: alpha, beta, beta', and beta''. When a (nuclear-encoded) sigma factor is associated with the core the holoenzyme is formed, which can initiate transcription.

It localises to the plastid. The protein localises to the chloroplast. The catalysed reaction is RNA(n) + a ribonucleoside 5'-triphosphate = RNA(n+1) + diphosphate. In terms of biological role, DNA-dependent RNA polymerase catalyzes the transcription of DNA into RNA using the four ribonucleoside triphosphates as substrates. In Platanus occidentalis (Sycamore), this protein is DNA-directed RNA polymerase subunit alpha.